Here is a 338-residue protein sequence, read N- to C-terminus: Aspartate carbamoyltransferase catalytic subunit (338 aa).

Arginine 59 and threonine 60 together coordinate carbamoyl phosphate. An L-aspartate-binding site is contributed by lysine 87. Carbamoyl phosphate contacts are provided by arginine 109, histidine 142, and glutamine 145. L-aspartate contacts are provided by arginine 182 and arginine 253. The carbamoyl phosphate site is built by glycine 294 and proline 295.

Belongs to the aspartate/ornithine carbamoyltransferase superfamily. ATCase family. As to quaternary structure, heterododecamer (2C3:3R2) of six catalytic PyrB chains organized as two trimers (C3), and six regulatory PyrI chains organized as three dimers (R2).

It carries out the reaction carbamoyl phosphate + L-aspartate = N-carbamoyl-L-aspartate + phosphate + H(+). It participates in pyrimidine metabolism; UMP biosynthesis via de novo pathway; (S)-dihydroorotate from bicarbonate: step 2/3. Functionally, catalyzes the condensation of carbamoyl phosphate and aspartate to form carbamoyl aspartate and inorganic phosphate, the committed step in the de novo pyrimidine nucleotide biosynthesis pathway. The sequence is that of Aspartate carbamoyltransferase catalytic subunit from Prochlorococcus marinus subsp. pastoris (strain CCMP1986 / NIES-2087 / MED4).